The chain runs to 81 residues: Relaxin-like protein AGF (81 aa).

Cystine bridges form between C14–C66, C26–C79, and C65–C70. A glycan (N-linked (GlcNAc...) asparagine) is linked at N37.

Belongs to the insulin family. In terms of assembly, heterodimer of a B chain and an A chain linked by two disulfide bonds.

The protein localises to the secreted. Its function is as follows. Uncertain. The polypeptide is Relaxin-like protein AGF (Hypanus sabinus (Atlantic stingray)).